Here is a 161-residue protein sequence, read N- to C-terminus: General odorant-binding protein 2 (161 aa).

The N-terminal stretch at 1–20 (MVNRLILMVVVVFITDSVMG) is a signal peptide. Disulfide bonds link C39-C74, C70-C128, and C117-C137.

The protein belongs to the PBP/GOBP family. As to quaternary structure, homodimer. Olfactory tissue; expressed by the glia-like support cells that ensheathe the sensory neurons and line the base of the sensillum lumen.

Functionally, present in the aqueous fluid surrounding olfactory sensory dendrites and are thought to aid in the capture and transport of hydrophobic odorants into and through this fluid. This chain is General odorant-binding protein 2 (GOBP2), found in Manduca sexta (Tobacco hawkmoth).